Consider the following 442-residue polypeptide: Putative mannan endo-1,6-alpha-mannosidase C970.02 (442 aa).

Residues 1-19 (MSLTIFISLATILFSFAEA) form the signal peptide. N-linked (GlcNAc...) asparagine glycans are attached at residues Asn25, Asn82, Asn107, Asn131, Asn201, Asn236, Asn261, Asn264, Asn277, and Asn361.

This sequence belongs to the glycosyl hydrolase 76 family.

It catalyses the reaction Random hydrolysis of (1-&gt;6)-alpha-D-mannosidic linkages in unbranched (1-&gt;6)-mannans.. The protein is Putative mannan endo-1,6-alpha-mannosidase C970.02 of Schizosaccharomyces pombe (strain 972 / ATCC 24843) (Fission yeast).